The primary structure comprises 483 residues: Regulatory protein ViaA (483 aa).

Belongs to the ViaA family. As to quaternary structure, homodimer. Interacts with RavA.

Its subcellular location is the cytoplasm. Its function is as follows. Component of the RavA-ViaA chaperone complex, which may act on the membrane to optimize the function of some of the respiratory chains. ViaA stimulates the ATPase activity of RavA. The polypeptide is Regulatory protein ViaA (Shigella flexneri).